A 385-amino-acid chain; its full sequence is Acetate kinase (385 aa).

Asn9 provides a ligand contact to Mg(2+). ATP is bound at residue Lys16. Residue Arg87 coordinates substrate. The active-site Proton donor/acceptor is Asp144. ATP-binding positions include 202–206 and 277–279; these read HLGSG and DMR. Glu373 serves as a coordination point for Mg(2+).

The protein belongs to the acetokinase family. In terms of assembly, homodimer. The cofactor is Mg(2+). Requires Mn(2+) as cofactor.

It localises to the cytoplasm. It catalyses the reaction acetate + ATP = acetyl phosphate + ADP. The protein operates within metabolic intermediate biosynthesis; acetyl-CoA biosynthesis; acetyl-CoA from acetate: step 1/2. In terms of biological role, catalyzes the formation of acetyl phosphate from acetate and ATP. Can also catalyze the reverse reaction. This is Acetate kinase from Rickettsia felis (strain ATCC VR-1525 / URRWXCal2) (Rickettsia azadi).